A 316-amino-acid polypeptide reads, in one-letter code: L-lactate dehydrogenase (316 aa).

Residues valine 15, aspartate 37, lysine 42, tyrosine 68, and 82-83 (GL) contribute to the NAD(+) site. Residues glutamine 85, arginine 91, and 123-126 (NPVD) each bind substrate. Residues 121-123 (ASN) and threonine 146 contribute to the NAD(+) site. Residue 151–154 (DTSR) coordinates substrate. Beta-D-fructose 1,6-bisphosphate contacts are provided by arginine 156 and histidine 171. Residue histidine 178 is the Proton acceptor of the active site. Tyrosine 222 carries the post-translational modification Phosphotyrosine. Threonine 231 lines the substrate pocket.

Belongs to the LDH/MDH superfamily. LDH family. Homotetramer.

It localises to the cytoplasm. The catalysed reaction is (S)-lactate + NAD(+) = pyruvate + NADH + H(+). It participates in fermentation; pyruvate fermentation to lactate; (S)-lactate from pyruvate: step 1/1. Allosterically activated by fructose 1,6-bisphosphate (FBP). Functionally, catalyzes the conversion of lactate to pyruvate. The protein is L-lactate dehydrogenase of Borrelia turicatae (strain 91E135).